Consider the following 457-residue polypeptide: Cysteine--tRNA ligase (457 aa).

Zn(2+) is bound at residue Cys28. The 'HIGH' region motif lies at 30–40 (PTVYDTAHIGN). Residues Cys212, His237, and Glu241 each coordinate Zn(2+). A 'KMSKS' region motif is present at residues 270–274 (KMSKS). Lys273 provides a ligand contact to ATP.

It belongs to the class-I aminoacyl-tRNA synthetase family. In terms of assembly, monomer. Zn(2+) is required as a cofactor.

Its subcellular location is the cytoplasm. The catalysed reaction is tRNA(Cys) + L-cysteine + ATP = L-cysteinyl-tRNA(Cys) + AMP + diphosphate. This chain is Cysteine--tRNA ligase, found in Wolbachia pipientis wMel.